Here is a 152-residue protein sequence, read N- to C-terminus: Transcriptional regulator MraZ (152 aa).

2 consecutive SpoVT-AbrB domains span residues 5–52 and 81–124; these read ASAV…PLNQ and ATEC…SESE.

The protein belongs to the MraZ family. As to quaternary structure, forms oligomers.

Its subcellular location is the cytoplasm. The protein localises to the nucleoid. In Histophilus somni (strain 129Pt) (Haemophilus somnus), this protein is Transcriptional regulator MraZ.